Consider the following 363-residue polypeptide: MTKRILMLEDGNYFIGDAIGSEKETIGEVVFNTGMTGYQETITDPSYYGQIITFTYPLVGNYGVNRDDFESINPAVKGVVVREAAEYPSNWRNQITLNEFLKEKGIPGIAGIDTRKLTKLIRKEGTLKGILSAATADKEELLHHLRSVRLPVDQVHEVSSAKAFASPGDGKRVVLVDYGVKSSILRELNKRNCYVTVVPYNTTAEEILAMHPDGVMLSNGPGDPKDVPEALEMIRGIQGKLPLFGICLGHQLFALANGADTFKLKFGHRGANHPVKELATGRVDFTAQNHGYAVEKESLIGTDLKVTHIELNDETVEGLAHKEYQAYTVQYHPEANPGPSDVNYLFDEFMEMMNVKEEGELHA.

2 CPSase regions span residues 1–168 (MTKR…ASPG) and 1–172 (MTKR…DGKR). L-glutamine-binding residues include Ser46, Gly220, and Gly222. The Glutamine amidotransferase type-1 domain maps to 172–359 (RVVLVDYGVK…MEMMNVKEEG (188 aa)). Cys247 (nucleophile) is an active-site residue. L-glutamine contacts are provided by Leu248, Gln251, Asn289, Gly291, and Tyr292. Residues His332 and Glu334 contribute to the active site.

Belongs to the CarA family. In terms of assembly, composed of two chains; the small (or glutamine) chain promotes the hydrolysis of glutamine to ammonia, which is used by the large (or ammonia) chain to synthesize carbamoyl phosphate. Tetramer of heterodimers (alpha,beta)4.

It catalyses the reaction hydrogencarbonate + L-glutamine + 2 ATP + H2O = carbamoyl phosphate + L-glutamate + 2 ADP + phosphate + 2 H(+). The catalysed reaction is L-glutamine + H2O = L-glutamate + NH4(+). It participates in amino-acid biosynthesis; L-arginine biosynthesis; carbamoyl phosphate from bicarbonate: step 1/1. Its pathway is pyrimidine metabolism; UMP biosynthesis via de novo pathway; (S)-dihydroorotate from bicarbonate: step 1/3. Small subunit of the glutamine-dependent carbamoyl phosphate synthetase (CPSase). CPSase catalyzes the formation of carbamoyl phosphate from the ammonia moiety of glutamine, carbonate, and phosphate donated by ATP, constituting the first step of 2 biosynthetic pathways, one leading to arginine and/or urea and the other to pyrimidine nucleotides. The small subunit (glutamine amidotransferase) binds and cleaves glutamine to supply the large subunit with the substrate ammonia. The sequence is that of Carbamoyl phosphate synthase small chain from Listeria innocua serovar 6a (strain ATCC BAA-680 / CLIP 11262).